The following is a 192-amino-acid chain: Phosphoheptose isomerase (192 aa).

The SIS domain maps to 37–192; that stretch reads LADSFKQEGK…IQLVEKEMAK (156 aa). A substrate-binding site is contributed by 52 to 54; the sequence is NGG. The Zn(2+) site is built by His61 and Glu65. Substrate-binding positions include Glu65, 93 to 94, 119 to 121, Ser124, and Gln172; these read ND and STS. Gln172 and His180 together coordinate Zn(2+).

This sequence belongs to the SIS family. GmhA subfamily. In terms of assembly, homotetramer. The cofactor is Zn(2+).

It is found in the cytoplasm. The enzyme catalyses 2 D-sedoheptulose 7-phosphate = D-glycero-alpha-D-manno-heptose 7-phosphate + D-glycero-beta-D-manno-heptose 7-phosphate. It participates in carbohydrate biosynthesis; D-glycero-D-manno-heptose 7-phosphate biosynthesis; D-glycero-alpha-D-manno-heptose 7-phosphate and D-glycero-beta-D-manno-heptose 7-phosphate from sedoheptulose 7-phosphate: step 1/1. Its function is as follows. Catalyzes the isomerization of sedoheptulose 7-phosphate in D-glycero-D-manno-heptose 7-phosphate. The sequence is that of Phosphoheptose isomerase from Aeromonas salmonicida (strain A449).